Reading from the N-terminus, the 86-residue chain is Cell division topological specificity factor (86 aa).

This sequence belongs to the MinE family.

In terms of biological role, prevents the cell division inhibition by proteins MinC and MinD at internal division sites while permitting inhibition at polar sites. This ensures cell division at the proper site by restricting the formation of a division septum at the midpoint of the long axis of the cell. The polypeptide is Cell division topological specificity factor (Albidiferax ferrireducens (strain ATCC BAA-621 / DSM 15236 / T118) (Rhodoferax ferrireducens)).